A 61-amino-acid chain; its full sequence is Photosystem II reaction center protein K (61 aa).

A propeptide spanning residues 1–24 (MINIFSFICIYLHSALYSSSFFFG) is cleaved from the precursor. The chain crosses the membrane as a helical span at residues 40–60 (MPVIPLFFFLLAFVWQAAVSF).

Belongs to the PsbK family. As to quaternary structure, PSII is composed of 1 copy each of membrane proteins PsbA, PsbB, PsbC, PsbD, PsbE, PsbF, PsbH, PsbI, PsbJ, PsbK, PsbL, PsbM, PsbT, PsbX, PsbY, PsbZ, Psb30/Ycf12, at least 3 peripheral proteins of the oxygen-evolving complex and a large number of cofactors. It forms dimeric complexes.

The protein resides in the plastid. It localises to the chloroplast thylakoid membrane. One of the components of the core complex of photosystem II (PSII). PSII is a light-driven water:plastoquinone oxidoreductase that uses light energy to abstract electrons from H(2)O, generating O(2) and a proton gradient subsequently used for ATP formation. It consists of a core antenna complex that captures photons, and an electron transfer chain that converts photonic excitation into a charge separation. The sequence is that of Photosystem II reaction center protein K from Pelargonium hortorum (Common geranium).